The primary structure comprises 380 residues: M-protease (380 aa).

The first 27 residues, 1–27 (MKKPLGKIVASTALLISVAFSSSIASA), serve as a signal peptide directing secretion. Residues 28–111 (AEEAKEKYLI…IEEDAEVTTM (84 aa)) constitute a propeptide that is removed on maturation. An Inhibitor I9 domain is found at 34–111 (KYLIGFNEQE…IEEDAEVTTM (78 aa)). Ca(2+) is bound at residue Gln-113. Residues 116 to 379 (PWGISRVQAP…SGLVNAEAAT (264 aa)) form the Peptidase S8 domain. The Charge relay system role is filled by Asp-143. Residue Asp-151 participates in Ca(2+) binding. His-173 serves as the catalytic Charge relay system. Ca(2+) contacts are provided by Leu-184, Asn-186, Ile-188, Val-190, Ala-274, Tyr-276, Ala-279, and Asp-302. Ser-326 serves as the catalytic Charge relay system.

This sequence belongs to the peptidase S8 family. As to quaternary structure, monomer. The cofactor is Ca(2+).

It is found in the secreted. Its activity is regulated as follows. Activity is inhibited by phenylmethylsulfonyl fluoride and chymostatin. Alkaline serine protease that cleaves various substrates, including N-succinyl-Ala-Ala-Pro-Phe-pNA, N-succinyl-Ala-Ala-Pro-MetpNA, oxidized insulin B chain, casein, hemoglobin and scleroproteins, such as keratin, alpha-keratin and elastin. This is M-protease (aprE) from Shouchella clausii (strain KSM-K16) (Alkalihalobacillus clausii).